Consider the following 211-residue polypeptide: Dephospho-CoA kinase (211 aa).

Residues Val3–Ala206 form the DPCK domain. Residue Ala11–Thr16 coordinates ATP.

This sequence belongs to the CoaE family.

The protein localises to the cytoplasm. The catalysed reaction is 3'-dephospho-CoA + ATP = ADP + CoA + H(+). It functions in the pathway cofactor biosynthesis; coenzyme A biosynthesis; CoA from (R)-pantothenate: step 5/5. Catalyzes the phosphorylation of the 3'-hydroxyl group of dephosphocoenzyme A to form coenzyme A. The sequence is that of Dephospho-CoA kinase from Anaeromyxobacter dehalogenans (strain 2CP-C).